We begin with the raw amino-acid sequence, 314 residues long: Homoserine O-succinyltransferase (314 aa).

The active-site Acyl-thioester intermediate is cysteine 142. Substrate-binding residues include lysine 163 and serine 192. Histidine 235 serves as the catalytic Proton acceptor. Glutamate 237 is an active-site residue. Arginine 249 provides a ligand contact to substrate.

Belongs to the MetA family.

It is found in the cytoplasm. The enzyme catalyses L-homoserine + succinyl-CoA = O-succinyl-L-homoserine + CoA. The protein operates within amino-acid biosynthesis; L-methionine biosynthesis via de novo pathway; O-succinyl-L-homoserine from L-homoserine: step 1/1. Functionally, transfers a succinyl group from succinyl-CoA to L-homoserine, forming succinyl-L-homoserine. This is Homoserine O-succinyltransferase from Aeromonas salmonicida (strain A449).